The primary structure comprises 570 residues: Mitogen-activated protein kinase 11 (570 aa).

The Protein kinase domain occupies 26–317 (YEVLEVIGKG…AQEALADPYF (292 aa)). Residues 32 to 40 (IGKGSYGLV) and Lys-55 each bind ATP. The active-site Proton acceptor is Asp-152. Thr-188 carries the post-translational modification Phosphothreonine. The TXY motif lies at 188-190 (TDY). Tyr-190 bears the Phosphotyrosine mark.

It belongs to the protein kinase superfamily. CMGC Ser/Thr protein kinase family. MAP kinase subfamily. Dually phosphorylated on Thr-188 and Tyr-190, which activates the enzyme.

It carries out the reaction L-seryl-[protein] + ATP = O-phospho-L-seryl-[protein] + ADP + H(+). The enzyme catalyses L-threonyl-[protein] + ATP = O-phospho-L-threonyl-[protein] + ADP + H(+). With respect to regulation, activated by threonine and tyrosine phosphorylation. This is Mitogen-activated protein kinase 11 (MPK11) from Oryza sativa subsp. japonica (Rice).